Here is a 252-residue protein sequence, read N- to C-terminus: MSPGSGVKSEYMKRYREPRWDEYAPCYRELLRYRLGRRLLEQAHAPWLWDAWGPDSPSDSSASPSPAPRGALGEPSAPSAREEEQPVGERGAELRDAEEQDTVLPAPPKKDTEEKPEEHKTKETDGAPSGPGPRQQPSALCARGSKKATRSPQRSTSKIKENKHPFALYGWGERQMDMGSQKTHNVCASASVHEIHESALRAKNRRQVEKRKLAAQRQRAHSVDVEKNQRVKPASAENPWLTEYMRCYSARA.

Position 1 is an N-acetylmethionine (M1). Positions 9-15 (SEYMKRY) match the ST]-E-Y-X(3)-Y motif 1; required for efficient microtubule binding and stabilization motif. The disordered stretch occupies residues 49 to 163 (WDAWGPDSPS…RSTSKIKENK (115 aa)). A compositionally biased stretch (low complexity) spans 54-64 (PDSPSDSSASP). S65 carries the post-translational modification Phosphoserine. The span at 108–125 (PKKDTEEKPEEHKTKETD) shows a compositional bias: basic and acidic residues. Phosphoserine is present on S191. The ST]-E-Y-X(3)-Y motif 2; required for efficient microtubule binding and stabilization motif lies at 242–248 (TEYMRCY).

This sequence belongs to the CCSAP family. As to quaternary structure, associates with microtubules; the association occurs on polyglutamylated tubulin.

It is found in the cytoplasm. The protein resides in the cytoskeleton. The protein localises to the microtubule organizing center. It localises to the centrosome. Its subcellular location is the centriole. It is found in the spindle. The protein resides in the cilium basal body. The protein localises to the cilium axoneme. It localises to the cell projection. Its subcellular location is the axon. It is found in the cilium. Its function is as follows. Plays a role in microtubule (MT) stabilization and this stabilization involves the maintenance of NUMA1 at the spindle poles. Colocalizes with polyglutamylated MTs to promote MT stabilization and regulate bipolar spindle formation in mitosis. Binding of CCSAP to centrosomes and the spindle around centrosomes during mitosis inhibits MT depolymerization, thereby stabilizing the mitotic spindle. May play a role in embryonic development. May be required for proper cilia beating. The chain is Centriole, cilia and spindle-associated protein (Ccsap) from Mus musculus (Mouse).